We begin with the raw amino-acid sequence, 89 residues long: Small ribosomal subunit protein uS15 (89 aa).

It belongs to the universal ribosomal protein uS15 family. As to quaternary structure, part of the 30S ribosomal subunit. Forms a bridge to the 50S subunit in the 70S ribosome, contacting the 23S rRNA.

Functionally, one of the primary rRNA binding proteins, it binds directly to 16S rRNA where it helps nucleate assembly of the platform of the 30S subunit by binding and bridging several RNA helices of the 16S rRNA. Its function is as follows. Forms an intersubunit bridge (bridge B4) with the 23S rRNA of the 50S subunit in the ribosome. The protein is Small ribosomal subunit protein uS15 of Hamiltonella defensa subsp. Acyrthosiphon pisum (strain 5AT).